Consider the following 309-residue polypeptide: Ornithine carbamoyltransferase (309 aa).

Carbamoyl phosphate-binding positions include 57–60 (STRT), glutamine 84, arginine 108, and 135–138 (HPCQ). Residues asparagine 166, aspartate 226, and 230-231 (SM) each bind L-ornithine. Residues 265–266 (CL) and arginine 293 each bind carbamoyl phosphate.

This sequence belongs to the aspartate/ornithine carbamoyltransferase superfamily. OTCase family.

Its subcellular location is the cytoplasm. The enzyme catalyses carbamoyl phosphate + L-ornithine = L-citrulline + phosphate + H(+). It participates in amino-acid biosynthesis; L-arginine biosynthesis; L-arginine from L-ornithine and carbamoyl phosphate: step 1/3. Reversibly catalyzes the transfer of the carbamoyl group from carbamoyl phosphate (CP) to the N(epsilon) atom of ornithine (ORN) to produce L-citrulline. The protein is Ornithine carbamoyltransferase of Rhizorhabdus wittichii (strain DSM 6014 / CCUG 31198 / JCM 15750 / NBRC 105917 / EY 4224 / RW1) (Sphingomonas wittichii).